A 711-amino-acid polypeptide reads, in one-letter code: BCLAF1 and THRAP3 family member 3 (711 aa).

The segment covering 1 to 15 has biased composition (basic residues); the sequence is MARSRSRSPRWKHRS. 2 disordered regions span residues 1-42 and 48-67; these read MARS…YRKD and AWRM…PSRG. Residues Ser15 and Ser17 each carry the phosphoserine modification. The span at 48-57 shows a compositional bias: basic and acidic residues; sequence AWRMDSEKHG. 3 positions are modified to phosphoserine: Ser78, Ser80, and Ser187. 2 disordered regions span residues 94-350 and 371-404; these read KPHR…KDSI and EKIK…PSPI. Composition is skewed to basic and acidic residues over residues 163–197, 204–213, 220–242, 296–311, 318–349, and 371–383; these read FRFE…DFET, RYPEDRDFRK, RPKD…KPEH, SDGR…DRKY, LNRE…KKDS, and EKIK…RKES. Residue Lys400 forms a Glycyl lysine isopeptide (Lys-Gly) (interchain with G-Cter in SUMO2) linkage. A phosphoserine mark is found at Ser402 and Ser578.

This sequence belongs to the BCLAF1/THRAP3 family.

The protein localises to the mitochondrion. In Homo sapiens (Human), this protein is BCLAF1 and THRAP3 family member 3.